The sequence spans 220 residues: SSSTNNSSGSSSTNNSSGSSSTNNSSGSSSTNNASGSSSSNNTSGSSRNNSSGSSSSNNSSSGSSAGNSSGSSSSNSSGSSGIGSLSRNSSSSSSSQAAGSSSSRRVSADGSSSSSSASNSAAAQNSASSSETINADGSENESSSSSSSAAQNSATRSQVINADGSQSSSSSSSSASNQASATSSSSVSADGSESESSSSSSSSSSSSSESSSSSSWSSA.

Low complexity-rich tracts occupy residues 1-131 (SSST…ASSS) and 141-155 (NESS…QNSA). Residues 1-220 (SSSTNNSSGS…SSSSSSWSSA (220 aa)) are disordered. The span at 156 to 165 (TRSQVINADG) shows a compositional bias: polar residues. Over residues 166-220 (SQSSSSSSSSASNQASATSSSSVSADGSESESSSSSSSSSSSSSESSSSSSWSSA) the composition is skewed to low complexity.

In terms of tissue distribution, produced exclusively in the middle (MSG) section of silk glands.

Its subcellular location is the secreted. Functionally, provides the silk fibroin thread with a sticky coating. Acts as a cement by sticking silk threads together. This chain is Sericin-2 (SER2), found in Galleria mellonella (Greater wax moth).